The primary structure comprises 127 residues: Protein chibby homolog 1 (127 aa).

Residues 1–10 (MPLFGSTFSP) show a composition bias toward polar residues. A disordered region spans residues 1-26 (MPLFGSTFSPKKTPPRKSASLSNLHN). 2 positions are modified to phosphoserine: Ser9 and Ser20. The segment at 60–112 (IAETGISGGVDRREAQRLRRRNQQLEEENNLLRLKVDILLDMLSETTAESHLM) is minimal region for the interaction with PKD2. Residues 68-125 (GVDRREAQRLRRRNQQLEEENNLLRLKVDILLDMLSETTAESHLMEKELDELKSVSRR) adopt a coiled-coil conformation. Residues 77 to 98 (LRRRNQQLEEENNLLRLKVDIL) are leucine-zipper; mediates homodimerization.

It belongs to the chibby family. As to quaternary structure, homodimer. Homodimerization is essential for nuclear localization and interaction with KPNA4 but is dispensable for interaction with CTNNB1. Interacts with polycystin-2/PKD2 and GM130. Interacts with the C-terminal region of CTNNB1. Interacts (C-terminus) with TCIM (C-terminus), TCIM competes with CTNNB1 for the interaction with CBY1. Interacts with FAM92A; this interaction facilitates targeting of FAM92A to cilium basal body. Interacts with CIBAR2. Interacts with KPNA4.

It localises to the nucleus speckle. The protein resides in the cytoplasm. Its subcellular location is the cytoskeleton. It is found in the cilium basal body. The protein localises to the microtubule organizing center. It localises to the centrosome. The protein resides in the centriole. Its subcellular location is the golgi apparatus. It is found in the trans-Golgi network. The protein localises to the cell projection. It localises to the cilium. The protein resides in the flagellum. Its subcellular location is the nucleus. In terms of biological role, inhibits the Wnt/Wingless pathway by binding to CTNNB1/beta-catenin and inhibiting beta-catenin-mediated transcriptional activation through competition with TCF/LEF transcription factors. Has also been shown to play a role in regulating the intracellular trafficking of polycystin-2/PKD2 and possibly of other intracellular proteins. Promotes adipocyte and cardiomyocyte differentiation. The chain is Protein chibby homolog 1 (CBY1) from Bos taurus (Bovine).